Reading from the N-terminus, the 353-residue chain is Phospho-N-acetylmuramoyl-pentapeptide-transferase (353 aa).

10 consecutive transmembrane segments (helical) span residues 24 to 44 (LGFF…ILWA), 66 to 86 (TPTM…LLCA), 88 to 108 (LGNP…FVGF), 129 to 149 (FGML…KGLD), 160 to 180 (PLFE…FLSA), 192 to 212 (GLAS…VYVA), 229 to 249 (VGEL…FLWY), 256 to 276 (VFMG…NAIV), 281 to 301 (ILLV…ILQV), and 330 to 350 (KVIV…LLSL).

Belongs to the glycosyltransferase 4 family. MraY subfamily. It depends on Mg(2+) as a cofactor.

It is found in the cell inner membrane. It catalyses the reaction UDP-N-acetyl-alpha-D-muramoyl-L-alanyl-gamma-D-glutamyl-meso-2,6-diaminopimeloyl-D-alanyl-D-alanine + di-trans,octa-cis-undecaprenyl phosphate = di-trans,octa-cis-undecaprenyl diphospho-N-acetyl-alpha-D-muramoyl-L-alanyl-D-glutamyl-meso-2,6-diaminopimeloyl-D-alanyl-D-alanine + UMP. It participates in cell wall biogenesis; peptidoglycan biosynthesis. In terms of biological role, catalyzes the initial step of the lipid cycle reactions in the biosynthesis of the cell wall peptidoglycan: transfers peptidoglycan precursor phospho-MurNAc-pentapeptide from UDP-MurNAc-pentapeptide onto the lipid carrier undecaprenyl phosphate, yielding undecaprenyl-pyrophosphoryl-MurNAc-pentapeptide, known as lipid I. The chain is Phospho-N-acetylmuramoyl-pentapeptide-transferase from Helicobacter acinonychis (strain Sheeba).